A 122-amino-acid chain; its full sequence is Urease subunit beta (122 aa).

This sequence belongs to the urease beta subunit family. In terms of assembly, heterotrimer of UreA (gamma), UreB (beta) and UreC (alpha) subunits. Three heterotrimers associate to form the active enzyme.

The protein resides in the cytoplasm. The enzyme catalyses urea + 2 H2O + H(+) = hydrogencarbonate + 2 NH4(+). It functions in the pathway nitrogen metabolism; urea degradation; CO(2) and NH(3) from urea (urease route): step 1/1. The polypeptide is Urease subunit beta (Acetivibrio thermocellus (strain ATCC 27405 / DSM 1237 / JCM 9322 / NBRC 103400 / NCIMB 10682 / NRRL B-4536 / VPI 7372) (Clostridium thermocellum)).